Here is a 794-residue protein sequence, read N- to C-terminus: Zinc finger protein 148 (794 aa).

Lys-6 participates in a covalent cross-link: Glycyl lysine isopeptide (Lys-Gly) (interchain with G-Cter in SUMO2). Ser-51 is modified (phosphoserine). Glycyl lysine isopeptide (Lys-Gly) (interchain with G-Cter in SUMO2) cross-links involve residues Lys-88, Lys-115, and Lys-132. The C2H2-type 1 zinc finger occupies 171–193 (HVCEHCNAAFRTNYHLQRHVFIH). Thr-194 is subject to Phosphothreonine. 2 C2H2-type zinc fingers span residues 199–221 (FQCS…EKIH) and 227–249 (FRCD…KRTH). Residue Ser-250 is modified to Phosphoserine. Residues 255 to 278 (YQCEYCLQYFSRTDRVLKHKRMCH) form a C2H2-type 4 zinc finger. Lys-291 is covalently cross-linked (Glycyl lysine isopeptide (Lys-Gly) (interchain with G-Cter in SUMO2)). The tract at residues 298–346 (EEDSGFSTSPKDNSLPKKKRQKPEKKSSGMDKESVLDKSDTKKDRNDYL) is disordered. Phosphoserine occurs at positions 301 and 306. Lys-308 is covalently cross-linked (Glycyl lysine isopeptide (Lys-Gly) (interchain with G-Cter in SUMO2)). Over residues 321–344 (EKKSSGMDKESVLDKSDTKKDRND) the composition is skewed to basic and acidic residues. A Glycyl lysine isopeptide (Lys-Gly) (interchain with G-Cter in SUMO1); alternate cross-link involves residue Lys-356. A Glycyl lysine isopeptide (Lys-Gly) (interchain with G-Cter in SUMO2); alternate cross-link involves residue Lys-356. Residue Lys-402 forms a Glycyl lysine isopeptide (Lys-Gly) (interchain with G-Cter in SUMO2) linkage. The residue at position 412 (Ser-412) is a Phosphoserine. Residues Lys-421 and Lys-424 each participate in a glycyl lysine isopeptide (Lys-Gly) (interchain with G-Cter in SUMO2) cross-link. Polar residues predominate over residues 574 to 588 (NSSDVPEVTQSENVG). Positions 574–596 (NSSDVPEVTQSENVGSSSQASSS) are disordered. An N6-acetyllysine modification is found at Lys-607. A phosphoserine mark is found at Ser-665 and Ser-784.

The protein belongs to the krueppel C2H2-type zinc-finger protein family. In terms of assembly, interacts with HNRNPDL. Interacts with the 5FMC complex; the interaction requires association with CHTOP. Interacts with CAVIN1. In terms of processing, sumoylated with SUMO2. Desumoylated by SENP3, resulting in the stimulation of transcription of its target genes. In terms of tissue distribution, expressed in heart, lung, kidney, skeletal muscle, liver, brain and spleen.

It is found in the nucleus. Its function is as follows. Involved in transcriptional regulation. Represses the transcription of a number of genes including gastrin, stromelysin and enolase. Binds to the G-rich box in the enhancer region of these genes. The sequence is that of Zinc finger protein 148 (Znf148) from Rattus norvegicus (Rat).